Here is a 237-residue protein sequence, read N- to C-terminus: Octopine transport system permease protein OccQ (237 aa).

The region spanning 22 to 222 (TGMTVAVASS…LITFISGQAF (201 aa)) is the ABC transmembrane type-1 domain. 4 consecutive transmembrane segments (helical) span residues 24 to 44 (MTVA…CLGA), 72 to 92 (LVIY…GSLF), 96 to 116 (GFVS…VSAA), and 201 to 221 (FSFY…SGQA).

This sequence belongs to the binding-protein-dependent transport system permease family. HisMQ subfamily.

It is found in the cell inner membrane. In terms of biological role, component of the octopine active transport system probably consisting of four subunits: Q, M, P and T. This is Octopine transport system permease protein OccQ (occQ) from Rhizobium meliloti (Ensifer meliloti).